A 387-amino-acid polypeptide reads, in one-letter code: Probable peptidoglycan glycosyltransferase FtsW (387 aa).

Helical transmembrane passes span 20–40 (LYLL…VGSA), 61–81 (LFLL…LAFW), 86–106 (PVML…GIGV), 149–169 (TIRG…LLLL), 172–192 (DFGA…LGGA), 194–214 (LWHF…LAWY), 284–304 (LMGS…VLLI), 322–342 (GLGI…MGVL), and 349–369 (LPLM…VALI).

Belongs to the SEDS family. FtsW subfamily.

The protein resides in the cell inner membrane. It carries out the reaction [GlcNAc-(1-&gt;4)-Mur2Ac(oyl-L-Ala-gamma-D-Glu-L-Lys-D-Ala-D-Ala)](n)-di-trans,octa-cis-undecaprenyl diphosphate + beta-D-GlcNAc-(1-&gt;4)-Mur2Ac(oyl-L-Ala-gamma-D-Glu-L-Lys-D-Ala-D-Ala)-di-trans,octa-cis-undecaprenyl diphosphate = [GlcNAc-(1-&gt;4)-Mur2Ac(oyl-L-Ala-gamma-D-Glu-L-Lys-D-Ala-D-Ala)](n+1)-di-trans,octa-cis-undecaprenyl diphosphate + di-trans,octa-cis-undecaprenyl diphosphate + H(+). Its pathway is cell wall biogenesis; peptidoglycan biosynthesis. Peptidoglycan polymerase that is essential for cell division. This chain is Probable peptidoglycan glycosyltransferase FtsW, found in Nitrosococcus halophilus (strain Nc4).